We begin with the raw amino-acid sequence, 187 residues long: Anterior gradient protein 1 (187 aa).

Residues 1–20 (MQTGLSLVCLVLLCSALGEA) form the signal peptide.

Belongs to the AGR family.

The protein localises to the secreted. In terms of biological role, probably involved in cement gland formation. The protein is Anterior gradient protein 1 (ag1) of Xenopus tropicalis (Western clawed frog).